Consider the following 115-residue polypeptide: Large ribosomal subunit protein bL19 (115 aa).

This sequence belongs to the bacterial ribosomal protein bL19 family.

Functionally, this protein is located at the 30S-50S ribosomal subunit interface and may play a role in the structure and function of the aminoacyl-tRNA binding site. In Coxiella burnetii (strain CbuK_Q154) (Coxiella burnetii (strain Q154)), this protein is Large ribosomal subunit protein bL19.